The chain runs to 166 residues: MAKENSFDIVSRVDMQEVLNAVNQALREIETRFDFRGSKSRIIFENKPEITLISDDDFKLRNVIDILESKLIKRGINLKALRYGKVESAAGDTVRQVVTLVQGIEQDIAKKIVKAIKDSKVKVQASVQGDQVRVSGKNRDDLQLAINVVKGTELDIPVEFTNYRTI.

The protein belongs to the YajQ family.

Its function is as follows. Nucleotide-binding protein. In Desulforamulus reducens (strain ATCC BAA-1160 / DSM 100696 / MI-1) (Desulfotomaculum reducens), this protein is Nucleotide-binding protein Dred_1927.